Consider the following 229-residue polypeptide: Interleukin-27 subunit beta (229 aa).

Positions 1-20 (MTPQLLLALVLWASCPPCSG) are cleaved as a signal peptide. Fibronectin type-III domains follow at residues 24-130 (PPAA…IKPD) and 131-227 (PPEG…TMSL). N-linked (GlcNAc...) asparagine glycosylation is found at N55 and N105.

The protein belongs to the type I cytokine receptor family. Type 3 subfamily. As to quaternary structure, heterodimer with IL27/IL27A; not disulfide-linked. This heterodimer is known as interleukin IL-27. Heterodimer with IL12A; not disulfide-linked. This heterodimer is known as interleukin IL-35. Interacts with SQSTM1.

The protein localises to the secreted. Associates with IL27 to form the IL-27 interleukin, a heterodimeric cytokine which functions in innate immunity. IL-27 has pro- and anti-inflammatory properties, that can regulate T-helper cell development, suppress T-cell proliferation, stimulate cytotoxic T-cell activity, induce isotype switching in B-cells, and that has diverse effects on innate immune cells. Among its target cells are CD4 T-helper cells which can differentiate in type 1 effector cells (TH1), type 2 effector cells (TH2) and IL17 producing helper T-cells (TH17). It drives rapid clonal expansion of naive but not memory CD4 T-cells. It also strongly synergizes with IL-12 to trigger interferon-gamma/IFN-gamma production of naive CD4 T-cells, binds to the cytokine receptor WSX-1/TCCR. Another important role of IL-27 is its antitumor activity as well as its antiangiogenic activity with activation of production of antiangiogenic chemokines. The protein is Interleukin-27 subunit beta (EBI3) of Homo sapiens (Human).